A 130-amino-acid chain; its full sequence is Large ribosomal subunit protein bL19 (130 aa).

Belongs to the bacterial ribosomal protein bL19 family.

In terms of biological role, this protein is located at the 30S-50S ribosomal subunit interface and may play a role in the structure and function of the aminoacyl-tRNA binding site. The polypeptide is Large ribosomal subunit protein bL19 (Burkholderia vietnamiensis (strain G4 / LMG 22486) (Burkholderia cepacia (strain R1808))).